The following is a 164-amino-acid chain: Envelope glycoprotein L (164 aa).

The signal sequence occupies residues 1-24 (MRSLDRYAIFILLACGLLWRPCLS).

Belongs to the herpesviridae glycoprotein L family. As to quaternary structure, interacts with glycoprotein H (gH); this interaction is necessary for the correct processing and cell surface expression of gH. The heterodimer gH/gL seems to interact with gB trimers during fusion.

The protein localises to the virion membrane. It localises to the host cell membrane. The protein resides in the host Golgi apparatus. Its subcellular location is the host trans-Golgi network. In terms of biological role, the heterodimer glycoprotein H-glycoprotein L is required for the fusion of viral and plasma membranes leading to virus entry into the host cell. Acts as a functional inhibitor of gH and maintains gH in an inhibited form. Upon binding to host integrins, gL dissociates from gH leading to activation of the viral fusion glycoproteins gB and gH. In Equine herpesvirus 2 (strain 86/87) (EHV-2), this protein is Envelope glycoprotein L.